Here is a 536-residue protein sequence, read N- to C-terminus: Probable cytochrome P450 318a1 (536 aa).

Residues glutamate 439–arginine 457 show a composition bias toward basic and acidic residues. The tract at residues glutamate 439–aspartate 460 is disordered. Cysteine 477 provides a ligand contact to heme.

It belongs to the cytochrome P450 family. The cofactor is heme.

The protein localises to the endoplasmic reticulum membrane. It localises to the microsome membrane. Functionally, may be involved in the metabolism of insect hormones and in the breakdown of synthetic insecticides. This chain is Probable cytochrome P450 318a1 (Cyp318a1), found in Drosophila melanogaster (Fruit fly).